Reading from the N-terminus, the 420-residue chain is Serine hydroxymethyltransferase (420 aa).

(6S)-5,6,7,8-tetrahydrofolate is bound by residues L121 and 125 to 127 (GHL). Residue K230 is modified to N6-(pyridoxal phosphate)lysine.

Belongs to the SHMT family. In terms of assembly, homodimer. The cofactor is pyridoxal 5'-phosphate.

The protein resides in the cytoplasm. The catalysed reaction is (6R)-5,10-methylene-5,6,7,8-tetrahydrofolate + glycine + H2O = (6S)-5,6,7,8-tetrahydrofolate + L-serine. It participates in one-carbon metabolism; tetrahydrofolate interconversion. Its pathway is amino-acid biosynthesis; glycine biosynthesis; glycine from L-serine: step 1/1. Its function is as follows. Catalyzes the reversible interconversion of serine and glycine with tetrahydrofolate (THF) serving as the one-carbon carrier. This reaction serves as the major source of one-carbon groups required for the biosynthesis of purines, thymidylate, methionine, and other important biomolecules. Also exhibits THF-independent aldolase activity toward beta-hydroxyamino acids, producing glycine and aldehydes, via a retro-aldol mechanism. This Streptomyces avermitilis (strain ATCC 31267 / DSM 46492 / JCM 5070 / NBRC 14893 / NCIMB 12804 / NRRL 8165 / MA-4680) protein is Serine hydroxymethyltransferase.